The sequence spans 354 residues: Tsukushi (354 aa).

Positions 1-17 (MLCSLFLLLLAVGRVQT) are cleaved as a signal peptide. The 42-residue stretch at 18–59 (TRPCFPGCQCEEETFGLFDSFSLIRVDCSSLGPHIVPVPIPL) folds into the LRRNT domain. LRR repeat units follow at residues 60–81 (DTAHLDLSSNRLETVNESVLAG), 86–107 (TLAGLDLSYNLLTSIMPSAFSR), 110–131 (YLESLDLSHNGLAALPAEIFTS), 133–154 (PLSDINLSHNRLREVSISAFTT), 160–180 (ALHVDLSHNLIHRLLPHPARA), 186–207 (TIQSLNLSWNRFRAVPDLRDLP), 208–228 (LRYLSLDGNPLATINPDAFMG), 231–253 (GLTHLSLASLQGILHLPPHGFRE), 256–277 (GLQVLDLSGNPKLKWAGAEVFS), and 281–302 (LLQELDLSGSSLVPLPEMLLHH). Asn-75 is a glycosylation site (N-linked (GlcNAc...) asparagine). The N-linked (GlcNAc...) asparagine glycan is linked to Asn-138. The N-linked (GlcNAc...) asparagine glycan is linked to Asn-191.

Interacts with FZD4 (via FZ domain); competes with WNT2B for binding to FZD4, inhibiting Wnt signaling and repressing peripheral eye development. Interacts with TGFB1; the interaction contributes to regulation of the hair cycle. Interacts with netrin. Interacts with CCN2. As to expression, expressed in macrophages in inflamed wounds with wound expression starting 2 days post-wounding (dpw) (at protein level). At 7 dpw, expressed from epidermis and extracellular matrix in the wound edge to neoepidermis and granulation tissue and in panniculus carnosus under the granulation tissue (at protein level). After fibrosis, disappears in the dermal area at 11 dpw (at protein level). Expressed in the hair follicle during morphogenesis and the hair cycle (at protein level). In embryonic brain, strong expression in the olfactory bulb, anterior olfactory nucleus, neocortex, piriform cortex, glial wedge, midline zipper glia, indusium griseum and the area surrounding the anterior commissure (AC) but not on AC axons (at protein level). In the adult eye, expressed in retinal layers, lens epithelium, and ciliary body where it is expressed predominantly in the inner non-pigmented layer. Expressed in almost all brain regions in the embryo, in the cortex and the lateral ventricle at P0 and is restricted to the subventricular zone and lateral nucleus of the amygdala in adults. Prominent expression in hippocampal regions from early postnatal stages until postnatal day 15 and gradually declines at later stages. Expressed in almost all bone regions in the femurs of juveniles. In the inner ear, accumulates in nonprosensory regions during early embryonic stages and in both nonprosensory and prosensory regions in late embryonic stages. In the adult ear, expressed in the organ of Corti, spiral ganglion cells, and the stria vascularis. Highly expressed in the liver where it is detected primarily in hepatocytes but not in non-parenchymal cells.

It is found in the secreted. Contributes to various developmental events and other processes such as wound healing and cholesterol homeostasis through its interactions with multiple signaling pathways. Wnt signaling inhibitor which competes with WNT2B for binding to Wnt receptor FZD4 and represses WNT2B-dependent development of the peripheral eye. Plays a role in regulating the hair cycle by controlling TGFB1 signaling. Required for the development of the anterior commissure in the brain by inhibiting neurite outgrowth. Essential for terminal differentiation of hippocampal neural stem cells. Plays a role in regulating bone elongation and bone mass by modulating growth plate chondrocyte function and overall body size. Required for development of the inner ear through its involvement in stereocilia formation in inner hair cells. Facilitates wound healing by inhibiting secretion of TGFB1 from macrophages which prevents myofibroblast differentiation, maintaining inflammatory cell quiescence. Plays a role in cholesterol homeostasis by reducing circulating high-density lipoprotein cholesterol, lowering cholesterol efflux capacity and decreasing cholesterol-to-bile acid conversion in the liver. In one study, shown to negatively regulate sympathetic innervation in brown fat, leading to reduced energy expenditure. In another study, shown not to affect brown fat thermogenic capacity, body weight gain or glucose homeostasis. The protein is Tsukushi of Mus musculus (Mouse).